A 357-amino-acid polypeptide reads, in one-letter code: U5 small nuclear ribonucleoprotein 40 kDa protein (357 aa).

Residue lysine 18 forms a Glycyl lysine isopeptide (Lys-Gly) (interchain with G-Cter in SUMO2) linkage. The residue at position 21 (arginine 21) is an Asymmetric dimethylarginine. 7 WD repeats span residues glycine 64–alanine 103, glycine 107–arginine 146, glycine 149–threonine 189, glutamine 191–threonine 230, glycine 233–arginine 272, asparagine 283–lysine 322, and glycine 325–glutamine 357. A Glycyl lysine isopeptide (Lys-Gly) (interchain with G-Cter in SUMO2) cross-link involves residue lysine 270.

In terms of assembly, component of the pre-catalytic and catalytic spliceosome complexes. Component of the postcatalytic spliceosome P complex. Part of the U5 snRNP complex. Interacts with PRPF8. Component of the U4/U6-U5 tri-snRNP complex composed of the U4, U6 and U5 snRNAs and at least PRPF3, PRPF4, PRPF6, PRPF8, PRPF31, SNRNP200, TXNL4A, WDR57, SNRNP40, DDX23, CD2BP2, PPIH, SNU13, EFTUD2, SART1 and USP39. Component of the minor spliceosome, which splices U12-type introns.

It localises to the nucleus. Functionally, required for pre-mRNA splicing as component of the activated spliceosome. Component of the U5 small nuclear ribonucleoprotein (snRNP) complex and the U4/U6-U5 tri-snRNP complex, building blocks of the spliceosome. As a component of the minor spliceosome, involved in the splicing of U12-type introns in pre-mRNAs. This chain is U5 small nuclear ribonucleoprotein 40 kDa protein (SNRNP40), found in Pongo abelii (Sumatran orangutan).